The primary structure comprises 366 residues: 3-dehydroquinate synthase (366 aa).

NAD(+) contacts are provided by residues 69–74, 103–107, 127–128, Lys140, and Lys149; these read DGEAYK, GVIGD, and TT. Positions 182, 245, and 262 each coordinate Zn(2+).

It belongs to the sugar phosphate cyclases superfamily. Dehydroquinate synthase family. Co(2+) is required as a cofactor. The cofactor is Zn(2+). NAD(+) serves as cofactor.

It is found in the cytoplasm. It carries out the reaction 7-phospho-2-dehydro-3-deoxy-D-arabino-heptonate = 3-dehydroquinate + phosphate. It participates in metabolic intermediate biosynthesis; chorismate biosynthesis; chorismate from D-erythrose 4-phosphate and phosphoenolpyruvate: step 2/7. Its function is as follows. Catalyzes the conversion of 3-deoxy-D-arabino-heptulosonate 7-phosphate (DAHP) to dehydroquinate (DHQ). This is 3-dehydroquinate synthase from Pseudomonas fluorescens (strain ATCC BAA-477 / NRRL B-23932 / Pf-5).